Consider the following 404-residue polypeptide: Argininosuccinate synthase (404 aa).

ATP-binding positions include 10–18 (AYSGGLDTS) and Ala-37. L-citrulline contacts are provided by Tyr-90 and Ser-95. Gly-120 contributes to the ATP binding site. Residues Thr-122, Asn-126, and Asp-127 each contribute to the L-aspartate site. Residue Asn-126 coordinates L-citrulline. Positions 130, 180, 189, 265, and 277 each coordinate L-citrulline.

Belongs to the argininosuccinate synthase family. Type 1 subfamily. As to quaternary structure, homotetramer.

It localises to the cytoplasm. The catalysed reaction is L-citrulline + L-aspartate + ATP = 2-(N(omega)-L-arginino)succinate + AMP + diphosphate + H(+). Its pathway is amino-acid biosynthesis; L-arginine biosynthesis; L-arginine from L-ornithine and carbamoyl phosphate: step 2/3. The protein is Argininosuccinate synthase of Helicobacter hepaticus (strain ATCC 51449 / 3B1).